An 800-amino-acid chain; its full sequence is Leukocyte receptor cluster member 8 homolog (800 aa).

5 disordered regions span residues 118 to 149 (NYQS…MSYS), 175 to 229 (PCIQ…GFKF), 245 to 273 (SSEH…PQQQ), 335 to 394 (TIDW…GRGS), and 407 to 519 (KESS…HGHG). Composition is skewed to low complexity over residues 120-131 (QSMSSQSGQHQG) and 184-201 (NQSN…SQQS). Positions 252 to 261 (SAGQQQQQAT) are enriched in polar residues. Over residues 338–352 (WSREPLPGKDGGKES) the composition is skewed to basic and acidic residues. The span at 360 to 387 (QTTLQTSHGSTITITQSPRGGGNSTNAA) shows a compositional bias: polar residues. Over residues 409 to 418 (SSSSSSAGSR) the composition is skewed to low complexity. Composition is skewed to basic residues over residues 419 to 433 (SRSR…RRYR) and 508 to 519 (EKRAARFQHGHG). The 165-residue stretch at 636–800 (DHEEFNQCQA…KLSLAVLPNI (165 aa)) folds into the PCI domain.

In Xenopus laevis (African clawed frog), this protein is Leukocyte receptor cluster member 8 homolog (leng8).